The chain runs to 808 residues: Putative dimethyl sulfoxide reductase chain YnfE (808 aa).

A signal peptide (tat-type signal) is located at residues 1-43 (MSKNERMVGISRRTLVKSTAIGSLALAAGGFSLPFTLRNAAAA). A 4Fe-4S Mo/W bis-MGD-type domain is found at 49-110 (EKVVWGACSV…SIRRRINHPD (62 aa)). 4 residues coordinate [4Fe-4S] cluster: Cys-56, Cys-60, Cys-64, and Cys-96. A Mo-bis(molybdopterin guanine dinucleotide)-binding site is contributed by Ser-196.

Belongs to the prokaryotic molybdopterin-containing oxidoreductase family. [4Fe-4S] cluster serves as cofactor. Mo-bis(molybdopterin guanine dinucleotide) is required as a cofactor. Exported by the Tat system. The position of the signal peptide cleavage has not been experimentally proven.

The protein resides in the cell membrane. Functionally, terminal reductase during anaerobic growth on various sulfoxide and N-oxide compounds. The sequence is that of Putative dimethyl sulfoxide reductase chain YnfE (ynfE) from Escherichia coli (strain K12).